The primary structure comprises 350 residues: GTPase Obg (350 aa).

Residues 1–158 (MFIDSVKITL…RLVRLELKLI (158 aa)) enclose the Obg domain. Residues 159 to 339 (ADVGLVGFPN…LKFMLLEEIK (181 aa)) enclose the OBG-type G domain. GTP-binding positions include 165–172 (GFPNVGKS), 190–194 (FTTLT), 212–215 (DIPG), 280–283 (SKSD), and 320–322 (SSL). Mg(2+) contacts are provided by Ser-172 and Thr-192.

It belongs to the TRAFAC class OBG-HflX-like GTPase superfamily. OBG GTPase family. As to quaternary structure, monomer. Mg(2+) is required as a cofactor.

The protein resides in the cytoplasm. An essential GTPase which binds GTP, GDP and possibly (p)ppGpp with moderate affinity, with high nucleotide exchange rates and a fairly low GTP hydrolysis rate. Plays a role in control of the cell cycle, stress response, ribosome biogenesis and in those bacteria that undergo differentiation, in morphogenesis control. This is GTPase Obg from Campylobacter jejuni subsp. jejuni serotype O:2 (strain ATCC 700819 / NCTC 11168).